The primary structure comprises 254 residues: Caffeoyl-CoA O-methyltransferase (254 aa).

The disordered stretch occupies residues 1-25 (MATTNVEENKQTQEQQPKEIKHQEV). The segment covering 7–25 (EENKQTQEQQPKEIKHQEV) has biased composition (basic and acidic residues). Lysine 28 serves as a coordination point for substrate. Residues threonine 70, glutamate 92, 94–95 (GV), serine 100, aspartate 118, and alanine 147 each bind S-adenosyl-L-methionine. Substrate is bound at residue aspartate 170. Aspartate 170 lines the a divalent metal cation pocket. Aspartate 172 serves as a coordination point for S-adenosyl-L-methionine. Residues aspartate 196 and asparagine 197 each coordinate a divalent metal cation. Asparagine 201 contributes to the substrate binding site.

It belongs to the class I-like SAM-binding methyltransferase superfamily. Cation-dependent O-methyltransferase family. CCoAMT subfamily. It depends on a divalent metal cation as a cofactor.

The catalysed reaction is (E)-caffeoyl-CoA + S-adenosyl-L-methionine = (E)-feruloyl-CoA + S-adenosyl-L-homocysteine + H(+). It functions in the pathway aromatic compound metabolism; phenylpropanoid biosynthesis. Functionally, methylates caffeoyl-CoA to feruloyl-CoA and 5-hydroxyferuloyl-CoA to sinapoyl-CoA. Plays a role in the synthesis of feruloylated polysaccharides. Involved in the reinforcement of the plant cell wall. Also involved in the responding to wounding or pathogen challenge by the increased formation of cell wall-bound ferulic acid polymers. This is Caffeoyl-CoA O-methyltransferase from Mesembryanthemum crystallinum (Common ice plant).